The chain runs to 343 residues: Tribbles homolog 2 (343 aa).

The interval 25-50 (EELSSIRSAEPSQSFSPNLGSPSPPE) is disordered. Residues 29–45 (SIRSAEPSQSFSPNLGS) are compositionally biased toward polar residues. The 248-residue stretch at 61–308 (IGKYLLLEPL…SQEILDHPWF (248 aa)) folds into the Protein kinase domain.

This sequence belongs to the protein kinase superfamily. CAMK Ser/Thr protein kinase family. Tribbles subfamily. As to expression, highly expressed in the thyroid, also present in ovary and cerebrum.

Its subcellular location is the cytoplasm. The protein localises to the cytoskeleton. Its function is as follows. Interacts with MAPK kinases and regulates activation of MAP kinases. Does not display kinase activity. This Canis lupus familiaris (Dog) protein is Tribbles homolog 2.